We begin with the raw amino-acid sequence, 230 residues long: Metaxin-2 homolog (230 aa).

The protein belongs to the metaxin family. In terms of assembly, associates with the mitochondrial contact site and cristae organizing system (MICOS) complex (also known as MINOS or MitOS complex).

The protein localises to the mitochondrion outer membrane. Functionally, involved in transport of proteins into the mitochondrion. The sequence is that of Metaxin-2 homolog (mtx-2) from Caenorhabditis elegans.